A 231-amino-acid chain; its full sequence is 3-oxoadipate CoA-transferase subunit A (231 aa).

25–31 (GGFGTAG) serves as a coordination point for CoA.

It belongs to the 3-oxoacid CoA-transferase subunit A family. As to quaternary structure, heterodimer.

It catalyses the reaction 3-oxoadipate + succinyl-CoA = 3-oxoadipyl-CoA + succinate. It functions in the pathway aromatic compound metabolism; beta-ketoadipate pathway; acetyl-CoA and succinyl-CoA from 3-oxoadipate: step 1/2. The protein is 3-oxoadipate CoA-transferase subunit A (pcaI) of Pseudomonas putida (Arthrobacter siderocapsulatus).